Reading from the N-terminus, the 1212-residue chain is DNA topoisomerase 1 (1212 aa).

A Toprim domain is found at 1–114 (MKLVVVESPA…DVERVTFNAI (114 aa)). Glu7 and Asp80 together coordinate Mg(2+). Positions 130 to 556 (DNDLINAYLA…AFWHDFKPKT (427 aa)) constitute a Topo IA-type catalytic domain. Residues 164 to 169 (SAGRVQ) form an interaction with DNA region. The active-site O-(5'-phospho-DNA)-tyrosine intermediate is the Tyr293. The segment at 592 to 619 (CPSCHTGRLALKGGRFGAFIACSNYPEC) adopts a C4-type zinc-finger fold. 3 disordered regions span residues 687 to 742 (GKGN…GVST), 758 to 937 (ALAG…KARA), and 1107 to 1212 (RAKM…EVAE). Polar residues-rich tracts occupy residues 708-742 (ASSTGNVASSQSRMTGDETASSGNSRDSSAHGVST) and 770-782 (VSDNKGNNSSSTI). A compositionally biased stretch (basic and acidic residues) spans 815–840 (ADNRLLSHRNGDIDSRAIPADHKDSS). Polar residues-rich tracts occupy residues 881-890 (AITSDNSPSD) and 897-906 (STPSSATSSV). The segment covering 921–934 (KADEQAKEEEESRK) has biased composition (basic and acidic residues). The span at 1109 to 1140 (KMPKKKKTKKAAAKKPAAKKTTTKKAAPKKAT) shows a compositional bias: basic residues. Residues 1141–1151 (TKTATPKSATT) show a composition bias toward low complexity. Over residues 1167 to 1182 (PAKKAVAKKTTAKKPA) the composition is skewed to basic residues. The span at 1183 to 1199 (SKSATKKAPSSKTTAAK) shows a compositional bias: low complexity.

This sequence belongs to the type IA topoisomerase family. In terms of assembly, monomer. Mg(2+) serves as cofactor.

It carries out the reaction ATP-independent breakage of single-stranded DNA, followed by passage and rejoining.. Functionally, releases the supercoiling and torsional tension of DNA, which is introduced during the DNA replication and transcription, by transiently cleaving and rejoining one strand of the DNA duplex. Introduces a single-strand break via transesterification at a target site in duplex DNA. The scissile phosphodiester is attacked by the catalytic tyrosine of the enzyme, resulting in the formation of a DNA-(5'-phosphotyrosyl)-enzyme intermediate and the expulsion of a 3'-OH DNA strand. The free DNA strand then undergoes passage around the unbroken strand, thus removing DNA supercoils. Finally, in the religation step, the DNA 3'-OH attacks the covalent intermediate to expel the active-site tyrosine and restore the DNA phosphodiester backbone. In Zymomonas mobilis subsp. mobilis (strain ATCC 31821 / ZM4 / CP4), this protein is DNA topoisomerase 1.